Consider the following 290-residue polypeptide: 4-hydroxybenzoate octaprenyltransferase (290 aa).

Helical transmembrane passes span 21 to 41 (IGTL…VKGM), 44 to 64 (LSIL…GCVI), 84 to 104 (LATG…LVFC), 106 to 126 (FILV…AVFL), 142 to 162 (LFLG…SIEA), 212 to 232 (IISL…YLSQ), 235 to 255 (TSYF…CKLI), and 267 to 287 (FLNN…GIFF).

This sequence belongs to the UbiA prenyltransferase family. Requires Mg(2+) as cofactor.

Its subcellular location is the cell inner membrane. The enzyme catalyses all-trans-octaprenyl diphosphate + 4-hydroxybenzoate = 4-hydroxy-3-(all-trans-octaprenyl)benzoate + diphosphate. It participates in cofactor biosynthesis; ubiquinone biosynthesis. Functionally, catalyzes the prenylation of para-hydroxybenzoate (PHB) with an all-trans polyprenyl group. Mediates the second step in the final reaction sequence of ubiquinone-8 (UQ-8) biosynthesis, which is the condensation of the polyisoprenoid side chain with PHB, generating the first membrane-bound Q intermediate 3-octaprenyl-4-hydroxybenzoate. The sequence is that of 4-hydroxybenzoate octaprenyltransferase from Pasteurella multocida (strain Pm70).